The primary structure comprises 337 residues: P2Y purinoceptor 14 (337 aa).

The Extracellular segment spans residues 1–28; the sequence is MNATSVPPAEGSCPSNALITKQIIPMLY. The N-linked (GlcNAc...) asparagine glycan is linked to Asn-2. A helical membrane pass occupies residues 29-49; that stretch reads FVVFVAGILLNGMSGWVFFYV. Residues 50-54 lie on the Cytoplasmic side of the membrane; sequence PSSKS. Residues 55 to 75 traverse the membrane as a helical segment; it reads FIVYLKNIVIADFLMSLTFPF. Residues 76–95 are Extracellular-facing; that stretch reads KILGDLGLGLWQVKVFVCRV. Cys-93 and Cys-171 form a disulfide bridge. A helical transmembrane segment spans residues 96–116; sequence SAVLFYINMYVSIVFFGLIGF. The Cytoplasmic segment spans residues 117–138; the sequence is DRYYKIVKPLLTSFIQSISYSK. The chain crosses the membrane as a helical span at residues 139 to 159; it reads LLSVLVWSLTLLIALPNMILT. Residues 160–187 lie on the Extracellular side of the membrane; that stretch reads NRNVTEATRVKCMDLKSDLGLKWHKASS. A glycan (N-linked (GlcNAc...) asparagine) is linked at Asn-162. Residues 188–208 form a helical membrane-spanning segment; it reads YIFVGIFWIVFLSLIIFYTAI. Residues 209–233 lie on the Cytoplasmic side of the membrane; that stretch reads TKKIFKSHFKSRKNSVSVKKKSSRN. Residues 234–254 form a helical membrane-spanning segment; sequence IFSIMFVFFICFVPYHIARIP. The Extracellular segment spans residues 255 to 277; sequence YTQSQTEAHYSCQSKQILFYVKE. The chain crosses the membrane as a helical span at residues 278 to 298; it reads FSLLLSAANVCLDPIIYFFLC. Residues 299 to 337 lie on the Cytoplasmic side of the membrane; it reads QPFREVLCKKLHIQLKTQHDSETSKIKRENIIQESTDTL.

It belongs to the G-protein coupled receptor 1 family.

It is found in the cell membrane. Its function is as follows. Receptor for UDP-glucose and other UDP-sugar coupled to G-proteins. Not activated by ATP, ADP, UTP or ATP. The chain is P2Y purinoceptor 14 (P2RY14) from Bos taurus (Bovine).